The following is a 470-amino-acid chain: Uronate isomerase (470 aa).

The protein belongs to the metallo-dependent hydrolases superfamily. Uronate isomerase family.

The catalysed reaction is D-glucuronate = D-fructuronate. It catalyses the reaction aldehydo-D-galacturonate = keto-D-tagaturonate. It participates in carbohydrate metabolism; pentose and glucuronate interconversion. This is Uronate isomerase from Salmonella heidelberg (strain SL476).